Consider the following 331-residue polypeptide: MITTTALVPARRSAVRTLLATVTEHDGVSPLDEAALLALDGEDARHLLLTADGAATDTHAAEATAGSAASADPADPADPAAPADPADPADETLLGYVSVLGDGTVQGMVDPAHRRRGHGSALLRAALALRPDAGVWVHGALEGSLAFLTDAGLTETRRLLTLRRDLGGAQPLPSAPAPTLEGLRLDTFEESRDAEAWVAVNVRAFADHPEQGALTRADLEQRLAQPWFDAEDMLVALRDETLVGFVWIKREQPGATDRDAEIYVVATDPSVQGHRVAGHLMATVLERLERDGVPGVELYVEADNAPALRLYENWGFEVSGRDVQLRATERG.

Residue Glu33 coordinates 1D-myo-inositol 2-(L-cysteinylamino)-2-deoxy-alpha-D-glucopyranoside. Low complexity predominate over residues 59-86 (HAAEATAGSAASADPADPADPAAPADPA). Positions 59–89 (HAAEATAGSAASADPADPADPAAPADPADPA) are disordered. 115 to 120 (RRGHGS) is a binding site for acetyl-CoA. The N-acetyltransferase domain occupies 183–331 (LRLDTFEESR…DVQLRATERG (149 aa)). 1D-myo-inositol 2-(L-cysteinylamino)-2-deoxy-alpha-D-glucopyranoside is bound by residues Glu210, Lys249, and Glu261. 265–267 (VAT) contacts acetyl-CoA. A 1D-myo-inositol 2-(L-cysteinylamino)-2-deoxy-alpha-D-glucopyranoside-binding site is contributed by Tyr299. 304-309 (NAPALR) provides a ligand contact to acetyl-CoA.

The protein belongs to the acetyltransferase family. MshD subfamily. Monomer.

It catalyses the reaction 1D-myo-inositol 2-(L-cysteinylamino)-2-deoxy-alpha-D-glucopyranoside + acetyl-CoA = mycothiol + CoA + H(+). Functionally, catalyzes the transfer of acetyl from acetyl-CoA to desacetylmycothiol (Cys-GlcN-Ins) to form mycothiol. This is Mycothiol acetyltransferase from Brachybacterium faecium (strain ATCC 43885 / DSM 4810 / JCM 11609 / LMG 19847 / NBRC 14762 / NCIMB 9860 / 6-10).